Consider the following 610-residue polypeptide: DNA replication regulator sld2 (610 aa).

A compositionally biased stretch (basic and acidic residues) spans 28–42 (WAQKNDGKKPSREAI). 3 disordered regions span residues 28–115 (WAQK…AVHE), 127–261 (SPAV…ERSV), and 338–610 (EQGG…RRRR). 2 stretches are compositionally biased toward polar residues: residues 86–110 (ETSL…SQHY) and 232–261 (TKTS…ERSV). Composition is skewed to acidic residues over residues 373–386 (VPEE…DEAA) and 414–428 (FDDE…EEDL). Residues 442 to 464 (VFKKKGQKRTTRKVNMRPTRTKR) show a composition bias toward basic residues. Positions 470-480 (AEEEDDGEEEH) are enriched in acidic residues. A compositionally biased stretch (basic and acidic residues) spans 493–503 (KNLDGDDHHTL). The span at 514–527 (EFDDGSEGEDEEAE) shows a compositional bias: acidic residues. Residues 544-573 (SAKEKTKKDATTETKKKKGTKEGGDEEPAK) show a composition bias toward basic and acidic residues.

Belongs to the SLD2 family.

Its subcellular location is the cytoplasm. It localises to the nucleus. In terms of biological role, has a role in the initiation of DNA replication. Required at S-phase checkpoint. This Neurospora crassa (strain ATCC 24698 / 74-OR23-1A / CBS 708.71 / DSM 1257 / FGSC 987) protein is DNA replication regulator sld2 (drc-4).